A 115-amino-acid chain; its full sequence is U3-lycotoxin-Ls1r (115 aa).

The first 20 residues, 1–20 (MKFVLLFGVLLVTLFSYSSA), serve as a signal peptide directing secretion. The propeptide occupies 21–44 (EMLDDFHQADEDELVSLIKKEEAR). Intrachain disulfides connect Cys-48–Cys-63, Cys-55–Cys-72, Cys-62–Cys-87, and Cys-74–Cys-85.

The protein belongs to the neurotoxin 19 (CSTX) family. 01 subfamily. In terms of tissue distribution, expressed by the venom gland.

It is found in the secreted. The polypeptide is U3-lycotoxin-Ls1r (Lycosa singoriensis (Wolf spider)).